A 341-amino-acid chain; its full sequence is Ribosomal RNA small subunit methyltransferase H (341 aa).

Residues Gly47–Tyr49, Asp64, Phe91, Asp109, and Gln116 each bind S-adenosyl-L-methionine.

Belongs to the methyltransferase superfamily. RsmH family.

The protein resides in the cytoplasm. The catalysed reaction is cytidine(1402) in 16S rRNA + S-adenosyl-L-methionine = N(4)-methylcytidine(1402) in 16S rRNA + S-adenosyl-L-homocysteine + H(+). Functionally, specifically methylates the N4 position of cytidine in position 1402 (C1402) of 16S rRNA. This chain is Ribosomal RNA small subunit methyltransferase H, found in Sinorhizobium medicae (strain WSM419) (Ensifer medicae).